Reading from the N-terminus, the 723-residue chain is Phenylalanine ammonia-lyase (723 aa).

Y77 functions as the Proton donor/acceptor in the catalytic mechanism. A cross-link (5-imidazolinone (Ala-Gly)) is located at residues 182 to 184 (ASG). S183 is modified (2,3-didehydroalanine (Ser)). Residues N241, Q336, R342, N372, K443, E471, and N474 each coordinate (E)-cinnamate.

It belongs to the PAL/histidase family. Contains an active site 4-methylidene-imidazol-5-one (MIO), which is formed autocatalytically by cyclization and dehydration of residues Ala-Ser-Gly.

The protein resides in the cytoplasm. The enzyme catalyses L-phenylalanine = (E)-cinnamate + NH4(+). The protein operates within secondary metabolite biosynthesis. It participates in phenylpropanoid metabolism; trans-cinnamate biosynthesis; trans-cinnamate from L-phenylalanine: step 1/1. In terms of biological role, phenylalanine ammonia-lyase; part of the gene cluster that mediates the biosynthesis of squalestatin S1 (SQS1, also known as zaragozic acid A), a heavily oxidized fungal polyketide that offers potent cholesterol lowering activity by targeting squalene synthase (SS). SQS1 is composed of a 2,8-dioxobicyclic[3.2.1]octane-3,4,5-tricarboxyclic acid core that is connected to two lipophilic polyketide arms. These initial steps feature the priming of an unusual benzoic acid starter unit onto the highly reducing polyketide synthase clz14, followed by oxaloacetate extension and product release to generate a tricarboxylic acid containing product. The phenylalanine ammonia lyase (PAL) clz10 and the acyl-CoA ligase clz12 are involved in transforming phenylalanine into benzoyl-CoA. The citrate synthase-like protein clz17 is involved in connecting the C-alpha-carbons of the hexaketide chain and oxaloacetate to afford the tricarboxylic acid unit. The potential hydrolytic enzymes, clz11 and clz13, are in close proximity to pks2 and may participate in product release. On the other side, the tetraketide arm is synthesized by a the squalestatin tetraketide synthase clz2 and enzymatically esterified to the core in the last biosynthetic step, by the acetyltransferase clz6. The biosynthesis of the tetraketide must involve 3 rounds of chain extension. After the first and second rounds methyl-transfer occurs, and in all rounds of extension the ketoreductase and dehydratase are active. The enoyl reductase and C-MeT of clz2 are not active in the final round of extension. The acetyltransferase clz6 appears to have a broad substrate selectivity for its acyl CoA substrate, allowing the in vitro synthesis of novel squalestatins. The biosynthesis of SQS1 requires several oxidative steps likely performed by oxidoreductases clz3, clz15 and clz16. Finally, in support of the identification of the cluster as being responsible for SQS1 production, the cluster contains a gene encoding a putative squalene synthase (SS) clz20, suggesting a likely mechanism for self-resistance. The protein is Phenylalanine ammonia-lyase of Cochliobolus lunatus (Filamentous fungus).